We begin with the raw amino-acid sequence, 311 residues long: m7GpppX diphosphatase (311 aa).

Residues E159, K181, and 242-253 (HYQPSFYHLHVH) contribute to the substrate site. The Histidine triad motif signature appears at 249 to 253 (HLHVH). The active-site Nucleophile is the H251.

The protein belongs to the HIT family. Expressed in neurons in the ventral cord, the nerve ring and the pharynx.

The protein localises to the nucleus. It catalyses the reaction a 5'-end (N(7)-methyl 5'-triphosphoguanosine)-ribonucleoside in mRNA + H2O = N(7)-methyl-GMP + a 5'-end diphospho-ribonucleoside in mRNA + 2 H(+). The enzyme catalyses a 5'-end (N(2),N(2),N(7)-trimethyl 5'-triphosphoguanosine)-ribonucleoside in mRNA + H2O = (N(2),N(2),N(7))-trimethyl-GMP + a 5'-end diphospho-ribonucleoside in mRNA + 2 H(+). With respect to regulation, the hydrolytic product 7-methylguanosine diphosphate (m7GDP) efficiently inhibits the decapping scavenger activity and acts as a competitive inhibitor in vitro. In terms of biological role, decapping scavenger enzyme that catalyzes the cleavage of a residual cap structure following the degradation of mRNAs of the 3'-&gt;5' exosome-mediated mRNA decay pathway. Hydrolyzes cap analog structures like 7-methylguanosine nucleoside triphosphate (m7GpppG) and tri-methyl guanosine nucleoside triphosphate (m3(2,2,7)GpppG) with up to 2 nucleotide substrates (small capped oligoribonucleotides) and specifically releases 5'-phosphorylated RNA fragments and 7-methylguanosine monophosphate (m7GMP). Does not hydrolyze unmethylated cap analog (GpppG) and shows no decapping activity on intact m7GpppG-capped mRNA molecules. Does not hydrolyze 7-methylguanosine diphosphate (m7GDP) and tri-methylguanosine diphosphate (m3(2,2,7)GDP) to m(7)GMP and m3(2,2,7)GMP, respectively. May also play a role in the 5'-&gt;3 mRNA decay pathway; m7GDP, the downstream product released by the 5'-&gt;3' mRNA mediated decapping activity, may be also converted by dcs-1 to m7GMP. Binds to m7GpppG and strongly to m7GDP. This is m7GpppX diphosphatase (dcs-1) from Caenorhabditis elegans.